Consider the following 507-residue polypeptide: Monocarboxylate transporter 9 (507 aa).

Topologically, residues 1–12 (MVYRKPPDGGWG) are extracellular. A helical transmembrane segment spans residues 13–33 (WVIVIVSFFTQFLCYGSPLAV). Over 34–52 (GVLYLEWLDAFGEGKGKTA) the chain is Cytoplasmic. Residues 53–73 (WVGSLANGIGLLASPVCSICV) form a helical membrane-spanning segment. Topologically, residues 74-79 (SSFGAR) are extracellular. Residues 80-100 (PVAIFSGFMVAGGLMMSSFAP) traverse the membrane as a helical segment. Topologically, residues 101–102 (NI) are cytoplasmic. The helical transmembrane segment at 103 to 123 (YFLYLSYGIVVGLGCGLLYNA) threads the bilayer. Residues 124 to 136 (TVTITCQYFDKRR) are Extracellular-facing. Residues 137–157 (GLALGLISTGSSVGLFIYAAL) form a helical membrane-spanning segment. At 158–163 (QRELIE) the chain is on the cytoplasmic side. A helical membrane pass occupies residues 164 to 184 (LYGLDGCLLIVGALSLNILAC). Topologically, residues 185–302 (GSLMRPLESS…EETVVLFKNR (118 aa)) are extracellular. The chain crosses the membrane as a helical span at residues 303–323 (VFSALFFAILLFDIGGFPPSL). The Cytoplasmic portion of the chain corresponds to 324–340 (LMEDIARSANINEEDYH). A helical membrane pass occupies residues 341–361 (MPLVSIIGIMTAIGKLILGIL). The Extracellular segment spans residues 362–369 (ADFKWVNT). Residues 370-390 (LYLYVLTLLMMGAALLAIPFA) traverse the membrane as a helical segment. At 391–395 (RSYFT) the chain is on the cytoplasmic side. A helical membrane pass occupies residues 396-416 (LAVLSGILGFLTGNWSIFPYV). The Extracellular segment spans residues 417 to 430 (TTKTVGIEKLTHAY). The chain crosses the membrane as a helical span at residues 431 to 451 (GILMFFAGLGNSLGPPIVGWF). Topologically, residues 452 to 460 (YDWTQEYDT) are cytoplasmic. A helical membrane pass occupies residues 461–481 (AFYFSGFCVLLGGFLLLLAAL). Over 482-507 (PCWNACTDRSSKLPPNTYSYKVASSA) the chain is Extracellular.

This sequence belongs to the major facilitator superfamily. Monocarboxylate porter (TC 2.A.1.13) family.

It localises to the cell membrane. The enzyme catalyses creatine(in) = creatine(out). It catalyses the reaction (R)-carnitine(in) = (R)-carnitine(out). Extracellular pH-and Na(+)-sensitive low-affinity creatine transporter. Also functions as a pH-independent carnitine efflux transporter. This chain is Monocarboxylate transporter 9 (SLC16A9), found in Gallus gallus (Chicken).